A 424-amino-acid polypeptide reads, in one-letter code: Inhibin beta A chain (424 aa).

Positions 1–20 are cleaved as a signal peptide; it reads MPLLWLRGFLLASCWIIVRS. Positions 21–308 are excised as a propeptide; that stretch reads SPTPGSEGPG…EDHPHRRRRR (288 aa). N-linked (GlcNAc...) asparagine glycosylation is present at Asn-165. Residues 257–288 form a disordered region; it reads KKKKKEEEGEGKKKDGGDGGAGADEDKEQSHR. Over residues 261 to 273 the composition is skewed to basic and acidic residues; it reads KEEEGEGKKKDGG. Intrachain disulfides connect Cys-312–Cys-320, Cys-319–Cys-389, Cys-348–Cys-421, and Cys-352–Cys-423.

It belongs to the TGF-beta family. Dimeric, linked by one or more disulfide bonds. Inhibin A is a dimer of alpha/INHA and beta-A/INHBA. Activin A is a homodimer of beta-A/INHBA. Activin AB is a dimer of beta-A/INHBA and beta-B/INHBB. Interacts with FST and FSTL3; these interactions prevent activin A interaction to its type II receptor. Activin A interacts with ACVR2A. Activin A interacts with BMPR2. Inhibin A interacts with ACVR1; this interaction creates a non-signaling complex (NSC) that inhibits ACVR1-mediated BMP signaling. Inhibin A interacts with ACVR2A.

Its subcellular location is the secreted. Inhibins/activins are involved in regulating a number of diverse functions such as hypothalamic and pituitary hormone secretion, gonadal hormone secretion, germ cell development and maturation, erythroid differentiation, insulin secretion, nerve cell survival, embryonic axial development or bone growth, depending on their subunit composition. Its function is as follows. Activin A is a homodimer of INHBA that plays a role in several essential biological processes including embryonic development, stem cell maintenance and differentiation, haematopoiesis, cell proliferation and tissue fibrosis. Signals through type I (such as ACVR1B or ACVR1C) and type II receptors (such as ACVR2A, ACVR2B or BMPR2) which, upon ligand binding, phosphorylate SMAD2 and SMAD3 intracellular signaling mediators that form a complex with SMAD4, translocate to the nucleus and modulate gene expression. Can also activate alternative non-canonical intracellular signaling pathways including the p38 MAPK, extracellular signal-regulated kinases 1/2 (ERK1/2) and c-Jun N-terminal kinases (JNKs) to modulate cell migration and differentiation. Alternatively, promotes osteoblastic differentiation via ACVRL1-SMAD1/5/9 pathway. In addition, can engage the type I receptor ACVR1 to form an ACVR1-activin A-type II receptor non-signaling complex (NSC) that renders receptors unavailable for engagement with BMPs, hence resulting in an apparent inhibition of ACVR1-mediated BMP signaling. In terms of biological role, inhibin A is a dimer of alpha/INHA and beta-A/INHBA that functions as a feedback regulator in the hypothalamic-pituitary-gonadal (HPG) axis. Inhibits the secretion of FSH from the anterior pituitary gland by acting on pituitary gonadotrope cells. Antagonizes activin A by binding to the proteoglycan, betaglycan, and forming a stable complex with and, thereby, sequestering type II activin receptors while excluding type I receptor. The polypeptide is Inhibin beta A chain (INHBA) (Felis catus (Cat)).